Consider the following 251-residue polypeptide: MASQREMHLLIKYGYDGTKFEGFDRSNSKNSVESVIINVLSEYNITKNIESAARTDKNVSAAGNVFYIKTEERPEKILGILNGNIKNMFFHSYYLSNSYINPRYNSMKIYKYIIPYRIDSRLKNNIARFLGTHDFTNFSKNDYRNPVRTINKIEFEEYNDFTVVNFYGKSFVWHQLRSIIGFAMHSDEDPFSIKYHNRFLAEPEPLILYDIIYDNISFIKYRFNNRYIKNKYNSLFIESIIYRVFLRSIDV.

Catalysis depends on D56, which acts as the Nucleophile. Y110 lines the substrate pocket.

The protein belongs to the tRNA pseudouridine synthase TruA family.

It catalyses the reaction uridine(38/39/40) in tRNA = pseudouridine(38/39/40) in tRNA. Functionally, formation of pseudouridine at positions 38, 39 and 40 in the anticodon stem and loop of transfer RNAs. This Picrophilus torridus (strain ATCC 700027 / DSM 9790 / JCM 10055 / NBRC 100828 / KAW 2/3) protein is tRNA pseudouridine synthase A.